The sequence spans 512 residues: MGIQAAEISAILKDQIKNFGQEAEVAEVGRVLSVGDGIARVYGLDNVQAGEMVEFPGGIQGMALNLESDNVGVVIFGSDRDIKEGDTVKRTNSIVSVPTGDELLGRVVDGLGNPIDGKGPIKTKTTSVADVKAPGIIPRKSVHEPMATGLKAVDSMIPIGRGQRELIIGDRQTGKTAVALDAILNQKSYNDAAGDDESKKLYCVYVAIGQKRSTVAQLVKKLEETGAINYSIVVAATASEPAPMQFLAPYSATAMAEHFRDNGRHALIVYDDLSKQAVSYRQMSLLLRRPPGREAYPGDVFYLHSRLLERSAKLGDDAGNGSLTALPIIETQGGDVSAFIPTNVISITDGQIFLETELFYQGIRPAVNTGLSVSRVGSSAQTSAMSSVAGPVKLSLAQYREMAAFAQFGSDLDASTQQLLARGARLTELMKQPQYSPLTNAEIVCVIFAGTNGFLDKVDVKDVGRFEEALLNHMRSKHSDVLDWITNEDPKIKGDAADKLKAAISEFASDFA.

Residue 169-176 coordinates ATP; the sequence is GDRQTGKT.

Belongs to the ATPase alpha/beta chains family. F-type ATPases have 2 components, CF(1) - the catalytic core - and CF(0) - the membrane proton channel. CF(1) has five subunits: alpha(3), beta(3), gamma(1), delta(1), epsilon(1). CF(0) has four main subunits: a(1), b(1), b'(1) and c(9-12).

It localises to the cell inner membrane. It carries out the reaction ATP + H2O + 4 H(+)(in) = ADP + phosphate + 5 H(+)(out). Produces ATP from ADP in the presence of a proton gradient across the membrane. The alpha chain is a regulatory subunit. This is ATP synthase subunit alpha from Roseobacter denitrificans (strain ATCC 33942 / OCh 114) (Erythrobacter sp. (strain OCh 114)).